The primary structure comprises 457 residues: ATP synthase subunit beta (457 aa).

ATP is bound at residue 147–154 (GGAGVGKT).

The protein belongs to the ATPase alpha/beta chains family. F-type ATPases have 2 components, CF(1) - the catalytic core - and CF(0) - the membrane proton channel. CF(1) has five subunits: alpha(3), beta(3), gamma(1), delta(1), epsilon(1). CF(0) has three main subunits: a(1), b(2) and c(9-12). The alpha and beta chains form an alternating ring which encloses part of the gamma chain. CF(1) is attached to CF(0) by a central stalk formed by the gamma and epsilon chains, while a peripheral stalk is formed by the delta and b chains.

It localises to the cell inner membrane. It catalyses the reaction ATP + H2O + 4 H(+)(in) = ADP + phosphate + 5 H(+)(out). Produces ATP from ADP in the presence of a proton gradient across the membrane. The catalytic sites are hosted primarily by the beta subunits. This Haemophilus influenzae (strain PittEE) protein is ATP synthase subunit beta.